The primary structure comprises 143 residues: Nucleoside diphosphate kinase (143 aa).

Residues Lys-11, Phe-59, Arg-87, Thr-93, Arg-104, and Asn-114 each coordinate ATP. His-117 acts as the Pros-phosphohistidine intermediate in catalysis.

It belongs to the NDK family. As to quaternary structure, homotetramer. Mg(2+) serves as cofactor.

It is found in the cytoplasm. It carries out the reaction a 2'-deoxyribonucleoside 5'-diphosphate + ATP = a 2'-deoxyribonucleoside 5'-triphosphate + ADP. It catalyses the reaction a ribonucleoside 5'-diphosphate + ATP = a ribonucleoside 5'-triphosphate + ADP. Major role in the synthesis of nucleoside triphosphates other than ATP. The ATP gamma phosphate is transferred to the NDP beta phosphate via a ping-pong mechanism, using a phosphorylated active-site intermediate. The polypeptide is Nucleoside diphosphate kinase (Alteromonas mediterranea (strain DSM 17117 / CIP 110805 / LMG 28347 / Deep ecotype)).